Here is a 256-residue protein sequence, read N- to C-terminus: MFPYLGIIIASIFGYLLGSVLWSVPITKWVKGVSIYEVGSNNPGATNTVRILGKRWGLAVALLDGFKVLITAAFAIGLSMIPNELFSKTSYFIPCIFVLIGHCWPIWFKFKGGKAVSCFLGLLIVVNYLYFLIFFIVWWIFAFKYRKVSLSSIIGTATILLLMWLPWTYGVMGYSLFNGYDSFIVAWDKHIVFSFYNLFHKFSSNIHGSNFADGMLTGQIVILIGMVILVVRHKSNIVKLKNKTEQPIYPKKEKNV.

6 helical membrane passes run 2–22 (FPYLGIIIASIFGYLLGSVLW), 58–78 (LAVALLDGFKVLITAAFAIGL), 90–110 (SYFIPCIFVLIGHCWPIWFKF), 123–143 (LIVVNYLYFLIFFIVWWIFAF), 153–173 (IIGTATILLLMWLPWTYGVMG), and 211–231 (FADGMLTGQIVILIGMVILVV).

This sequence belongs to the PlsY family. In terms of assembly, probably interacts with PlsX.

The protein resides in the cell membrane. The catalysed reaction is an acyl phosphate + sn-glycerol 3-phosphate = a 1-acyl-sn-glycero-3-phosphate + phosphate. Its pathway is lipid metabolism; phospholipid metabolism. In terms of biological role, catalyzes the transfer of an acyl group from acyl-phosphate (acyl-PO(4)) to glycerol-3-phosphate (G3P) to form lysophosphatidic acid (LPA). This enzyme utilizes acyl-phosphate as fatty acyl donor, but not acyl-CoA or acyl-ACP. The sequence is that of Glycerol-3-phosphate acyltransferase from Mesoplasma florum (strain ATCC 33453 / NBRC 100688 / NCTC 11704 / L1) (Acholeplasma florum).